A 583-amino-acid polypeptide reads, in one-letter code: Protein FMP25, mitochondrial (583 aa).

Residues 1–25 (MSFRLFTRTSQRLPRLNWVSPIRRY) constitute a mitochondrion transit peptide. The helical transmembrane segment at 83-105 (AVGQGILILVVVGGLGTAYLRWP) threads the bilayer. RCC1 repeat units follow at residues 332–389 (KGQF…AIDK), 390–452 (TGEI…VTIR), 459–510 (DHHY…TETE), and 512–569 (ENEV…KEQR).

The protein resides in the mitochondrion membrane. This chain is Protein FMP25, mitochondrial (FMP25), found in Saccharomyces cerevisiae (strain ATCC 204508 / S288c) (Baker's yeast).